The sequence spans 372 residues: Glutamate 5-kinase (372 aa).

K14 lines the ATP pocket. Substrate contacts are provided by S54, D141, and N153. Position 173–174 (173–174 (TD)) interacts with ATP. One can recognise a PUA domain in the interval 280 to 358 (RGTLVLDDGA…DAIVGLLGYM (79 aa)).

Belongs to the glutamate 5-kinase family.

It is found in the cytoplasm. It carries out the reaction L-glutamate + ATP = L-glutamyl 5-phosphate + ADP. The protein operates within amino-acid biosynthesis; L-proline biosynthesis; L-glutamate 5-semialdehyde from L-glutamate: step 1/2. Functionally, catalyzes the transfer of a phosphate group to glutamate to form L-glutamate 5-phosphate. The polypeptide is Glutamate 5-kinase (Pseudomonas fluorescens (strain Pf0-1)).